A 249-amino-acid chain; its full sequence is Basigin (249 aa).

Residues alanine 1 to glycine 82 form the Ig-like C2-type domain. Over alanine 1–alanine 187 the chain is Extracellular. 2 disulfides stabilise this stretch: cysteine 20–cysteine 66 and cysteine 105–cysteine 165. Asparagine 23, asparagine 132, and asparagine 166 each carry an N-linked (GlcNAc...) asparagine glycan. The region spanning proline 84 to threonine 179 is the Ig-like V-type domain. Residues alanine 188 to isoleucine 208 form a helical membrane-spanning segment. Over tyrosine 209 to threonine 249 the chain is Cytoplasmic. The tract at residues aspartate 216–threonine 249 is disordered. The residue at position 218 (threonine 218) is a Phosphothreonine. Serine 232 bears the Phosphoserine mark.

In terms of assembly, homooligomer. Interacts with VEGFA, KDR/VEGFR2, PPIA/CYPA, SLC16A12, SLC16A11, ATP1B2, MAG, L1CAM and AJAP1. Interacts with SLC16A3; interaction mediates SLC16A3 targeting to the plasma membrane. Interacts with SLC16A1; interaction mediates SLC16A1 targeting to the plasma membrane. Interacts with PPIL2; regulates BSG transport to the cell membrane. Interacts with XKR8; promoting its localization at the cell membrane. Interacts with SLC16A6; this interaction mediates targeting to the plasma membrane.

It localises to the cell membrane. The protein resides in the endoplasmic reticulum membrane. It is found in the basolateral cell membrane. Its function is as follows. Signaling receptor for cyclophilins, essential for PPIA/CYPA and PPIB/CYPB-dependent signaling related to chemotaxis and adhesion of immune cells. Plays an important role in targeting the monocarboxylate transporters SLC16A1/GLUT1, SLC16A3, SLC16A8, SLC16A11 and SLC16A12 to the plasma membrane. Acts as a coreceptor for vascular endothelial growth factor receptor 2 (KDR/VEGFR2) in endothelial cells enhancing its VEGFA-mediated activation and downstream signaling. Promotes angiogenesis through EPAS1/HIF2A-mediated up-regulation of VEGFA and KDR/VEGFR2 in endothelial cells. This Cricetulus griseus (Chinese hamster) protein is Basigin (BSG).